A 331-amino-acid polypeptide reads, in one-letter code: Taste receptor type 2 member 38 (331 aa).

Residues methionine 1–serine 17 lie on the Extracellular side of the membrane. The helical transmembrane segment at phenylalanine 18 to leucine 38 threads the bilayer. The Cytoplasmic portion of the chain corresponds to valine 39 to aspartate 54. A helical transmembrane segment spans residues isoleucine 55–alanine 75. At isoleucine 76 to alanine 94 the chain is on the extracellular side. A helical transmembrane segment spans residues isoleucine 95–leucine 115. Topologically, residues leucine 116–glutamine 142 are cytoplasmic. A helical transmembrane segment spans residues methionine 143–phenylalanine 163. At serine 164–asparagine 198 the chain is on the extracellular side. N-linked (GlcNAc...) asparagine glycosylation occurs at asparagine 177. Residues valine 199–leucine 219 form a helical membrane-spanning segment. Residues glycine 220 to arginine 243 lie on the Cytoplasmic side of the membrane. The helical transmembrane segment at alanine 244–isoleucine 264 threads the bilayer. The Extracellular portion of the chain corresponds to serine 265–glycine 276. Residues glycine 277–isoleucine 297 traverse the membrane as a helical segment. The Cytoplasmic segment spans residues serine 298–leucine 331.

The protein belongs to the G-protein coupled receptor T2R family. Expressed in tongue, stomach and duodenum.

The protein localises to the membrane. Its function is as follows. Putative taste receptor which may play a role in the perception of bitterness. In Rattus norvegicus (Rat), this protein is Taste receptor type 2 member 38 (Tas2r38).